Reading from the N-terminus, the 253-residue chain is uncharacterized protein (253 aa).

Isoleucine 17, serine 36, aspartate 62, asparagine 89, tyrosine 158, lysine 162, valine 191, and threonine 193 together coordinate NADP(+). Residue tyrosine 158 is the Proton donor of the active site. Lysine 162 (lowers pKa of active site Tyr) is an active-site residue.

Belongs to the short-chain dehydrogenases/reductases (SDR) family.

It localises to the cytoplasm. Its subcellular location is the nucleus. This is an uncharacterized protein from Schizosaccharomyces pombe (strain 972 / ATCC 24843) (Fission yeast).